A 290-amino-acid chain; its full sequence is 4-hydroxybenzoate octaprenyltransferase (290 aa).

9 consecutive transmembrane segments (helical) span residues 23-43 (IGTE…SDGY), 46-66 (LKMF…GCAI), 96-116 (AIWV…FLPI), 118-138 (TFYW…MKRY), 141-161 (LPQV…YTAT), 169-189 (CWLL…QYAI), 212-232 (IPII…ALYI), 235-255 (LLFP…IYQW), and 265-285 (LCFW…LAIL).

The protein belongs to the UbiA prenyltransferase family. Mg(2+) is required as a cofactor.

The protein localises to the cell inner membrane. It carries out the reaction all-trans-octaprenyl diphosphate + 4-hydroxybenzoate = 4-hydroxy-3-(all-trans-octaprenyl)benzoate + diphosphate. It participates in cofactor biosynthesis; ubiquinone biosynthesis. In terms of biological role, catalyzes the prenylation of para-hydroxybenzoate (PHB) with an all-trans polyprenyl group. Mediates the second step in the final reaction sequence of ubiquinone-8 (UQ-8) biosynthesis, which is the condensation of the polyisoprenoid side chain with PHB, generating the first membrane-bound Q intermediate 3-octaprenyl-4-hydroxybenzoate. This chain is 4-hydroxybenzoate octaprenyltransferase, found in Acinetobacter baylyi (strain ATCC 33305 / BD413 / ADP1).